The sequence spans 629 residues: MTIKNVLKLAALLGVLALVQAEEQTYRMCVPQKYYEDCLNLLKDPSEAGIRMECVAGRDRIDCLDKINQRKADVLASEPEDMYVAYHTKNSDYKVISEIRTQEDKDAAFRYEGIILVKKNSNIHSLKELRGAKSCHTGFGRNVGFKIPVTKLKNAHILKVSMDPELTATERELKALSEFFSESCLVGTYSPYPETDRLLKKKYPNLCALCEKPEQCNYPDKFSGYDGAIRCLDKGKGEVAFTKVQFIKKYFGMVPGVTAEGDPSEFEYLCEDGSRRPLNGPACSWAQRPWTGYISNVDAVSGDEKLHNLQHRLEKFFENGLHAENKEAASHLLINPNAVYHSKPQAVDPKEYLEKAGYKDVIERDGSAIRKMKMCVQTDVEMQKCDTMRRAAYSREIRPEIECVQEKDCILAVKDNKADMVAVPAQNYKEARDGKLKPIVYESYGPNNVYVAVVDSALTKENLQSMPIHYNGQDHRAEKAAAYLNKLRGINTCQTTPSSEKNIMIVNAQQLEQYKNKQLLCSSLDKKPVTEWQSCNLEANLPVGVFIRETMTPVEQETMKHLFVSLSDKFGSKGKLPDVFTLFGQYKDNVHNVLFADDAVEFVTELKNPNTNEQTYNGLKCDTNTIKKN.

The N-terminal stretch at methionine 1–alanine 21 is a signal peptide. 2 consecutive Transferrin-like domains span residues tyrosine 26–glycine 366 and methionine 372–cysteine 621. Disulfide bonds link cysteine 29-cysteine 63 and cysteine 38-cysteine 54. Position 111 (tyrosine 111) interacts with Fe(3+). 6 disulfide bridges follow: cysteine 135–cysteine 231, cysteine 184–cysteine 210, cysteine 207–cysteine 216, cysteine 270–cysteine 283, cysteine 375–cysteine 409, and cysteine 385–cysteine 403. Positions 137, 141, 143, and 144 each coordinate hydrogencarbonate. Tyrosine 225 serves as a coordination point for Fe(3+). Positions 408 and 561 each coordinate Fe(3+).

Belongs to the transferrin family. In terms of assembly, monomer.

Functionally, transferrins are iron binding transport proteins which bind Fe(3+) ion in association with the binding of an anion, usually bicarbonate. This transferrin binds only one Fe(3+) ion per protein molecule. Transports iron ions from the hemolymph into the eggs during the vitellogenic stage (oogenesis). This chain is Transferrin, found in Sarcophaga peregrina (Flesh fly).